Consider the following 268-residue polypeptide: Thiazole synthase (268 aa).

The active-site Schiff-base intermediate with DXP is lysine 108. 1-deoxy-D-xylulose 5-phosphate-binding positions include glycine 169, 195 to 196 (AG), and 217 to 218 (NS). Residues 248 to 268 (RLKENPLASPSSPLEGVISNN) form a disordered region. Residues 255–268 (ASPSSPLEGVISNN) are compositionally biased toward polar residues.

This sequence belongs to the ThiG family. Homotetramer. Forms heterodimers with either ThiH or ThiS.

The protein resides in the cytoplasm. The catalysed reaction is [ThiS sulfur-carrier protein]-C-terminal-Gly-aminoethanethioate + 2-iminoacetate + 1-deoxy-D-xylulose 5-phosphate = [ThiS sulfur-carrier protein]-C-terminal Gly-Gly + 2-[(2R,5Z)-2-carboxy-4-methylthiazol-5(2H)-ylidene]ethyl phosphate + 2 H2O + H(+). It participates in cofactor biosynthesis; thiamine diphosphate biosynthesis. In terms of biological role, catalyzes the rearrangement of 1-deoxy-D-xylulose 5-phosphate (DXP) to produce the thiazole phosphate moiety of thiamine. Sulfur is provided by the thiocarboxylate moiety of the carrier protein ThiS. In vitro, sulfur can be provided by H(2)S. This is Thiazole synthase from Prochlorococcus marinus (strain NATL1A).